A 337-amino-acid chain; its full sequence is G-protein coupled receptor 26 (337 aa).

Topologically, residues 1-10 are extracellular; it reads MNSWDAGLAG. A helical membrane pass occupies residues 11–31; that stretch reads LLVGTIGVSLLSNGLVLLCLL. Over 32–47 the chain is Cytoplasmic; it reads HSADIRRQAPALFTLN. The chain crosses the membrane as a helical span at residues 48–68; the sequence is LTCGNLLCTVVNMPLTLAGVV. Over 69-81 the chain is Extracellular; that stretch reads AQRQPAGDRLCRL. A disulfide bond links Cys-79 and Cys-156. Residues 82 to 102 traverse the membrane as a helical segment; that stretch reads AAFLDTFLAANSMLSMAALSI. Over 103–123 the chain is Cytoplasmic; sequence DRWVAVVFPLSYRAKMRLRDA. A helical membrane pass occupies residues 124-144; the sequence is AFMVAYTWLHALTFPATALAL. Residues 145-168 are Extracellular-facing; the sequence is SWLGFHQLYASCTLCSRRPDERLR. Residues 169–189 form a helical membrane-spanning segment; the sequence is FAVFTSAFHALSFLLSFIVLC. Topologically, residues 190-245 are cytoplasmic; it reads FTYLKVLKVARFHCKRIDVITMQTLVLLVDIHPSVRERCLEEQKRRRQRATKKIST. Residues 246-266 traverse the membrane as a helical segment; the sequence is FIGTFLVCFAPYVITRLVELF. The Extracellular portion of the chain corresponds to 267-276; that stretch reads STAPIDSHWG. The chain crosses the membrane as a helical span at residues 277–297; it reads VLSKCLAYSKAASDPFVYSLL. Topologically, residues 298 to 337 are cytoplasmic; it reads RHQYRRSCKELLNRIFNRRSIHSVGLTGDSHSQNILPVSE.

Belongs to the G-protein coupled receptor 1 family. In terms of tissue distribution, detected in extracts of several brain regions including striatum, pons, cerebellum and cortex. Not detected in numerous peripheral tissue extracts, except in testis. In the brain, detected in cortical structures including the anterior cingulate area, posterior cingulate and the frontoparietal, somatosensory and piriform cortices. Prominent also in the olfactory tubercle, the islands of Calleja, ventromedial and posterior nuclei of the hypothalamus, the medial septal nucleus, nucleus of the diagonal band and the ventral tegmental area. Localized also to hippocampal structures, with signals strongest over the CA2 and CA3 regions of Ammon's horn and less so over the dentate gyrus. Expressed in the caudate putamen only in its most caudal portion, with a decreasing gradient of signal from the dorsal to ventral aspect. Strong expression associated with a single pontine structure, the inferior olivary nucleus.

It localises to the cell membrane. Orphan receptor. Displays a significant level of constitutive activity. Its effect is mediated by G(s)-alpha protein that stimulate adenylate cyclase, resulting in an elevation of intracellular cAMP. The protein is G-protein coupled receptor 26 (Gpr26) of Rattus norvegicus (Rat).